A 935-amino-acid chain; its full sequence is Potassium channel AKT1 (935 aa).

The Cytoplasmic portion of the chain corresponds to 1–106 (MARWGAARMA…YDRRYRIWET (106 aa)). A helical membrane pass occupies residues 107-127 (FLIVLVVYSAWVSPFEFGFIP). The Extracellular segment spans residues 128–136 (KPTGALATA). The chain crosses the membrane as a helical span at residues 137–157 (DNVVNAFFAVDIILTFFVAYL). At 158-178 (DKMSYMLEDDPKKIAWRYSTT) the chain is on the cytoplasmic side. The chain crosses the membrane as a helical span at residues 179–199 (WLVLDVASTIPSEFARRILPS). Residues 200–205 (KLRSYG) lie on the Extracellular side of the membrane. A helical; Voltage-sensor transmembrane segment spans residues 206 to 226 (FFNMLRLWRLRRVSSLFSRLE). At 227–240 (KDRHFNYFWVRCAK) the chain is on the cytoplasmic side. A helical membrane pass occupies residues 241–261 (LICVTLFAVHCAACFYYLLAD). The Extracellular portion of the chain corresponds to 262–288 (RYPVPTSTWIGNYMADFHERSLWIRYV). The segment at residues 289-308 (TSVYWSITTLTTVGYGDLHA) is an intramembrane region (pore-forming). Residues 309–312 (ENTR) lie on the Extracellular side of the membrane. Residues 313–333 (EMIFNIFYMLFNLGLTAYLIG) form a helical membrane-spanning segment. The Cytoplasmic portion of the chain corresponds to 334-935 (NMTNLVVHGT…WDAEKMKGKS (602 aa)). Residue 419–538 (LFQGVSNDLI…TIIMNNLIQF (120 aa)) coordinates a nucleoside 3',5'-cyclic phosphate. 6 ANK repeats span residues 565-594 (DLPI…DPNE), 598-627 (DGHT…DPNA), 631-660 (EGKV…DLSS), 662-691 (DTGL…DVNR), 695-724 (DGTT…DIDK), and 728-757 (NGWT…ATAS). The interval 826-854 (SQAQRETDHPLSRGGLAATGSPNPSSGSR) is disordered. Residues 845-854 (GSPNPSSGSR) are compositionally biased toward polar residues. The KHA domain occupies 859–935 (RVTISCPEKG…WDAEKMKGKS (77 aa)).

The protein belongs to the potassium channel family. Plant (TC 1.A.1.4) subfamily. The potassium channel is probably a homo- or heterotetrameric complex of pore-forming subunits. In terms of tissue distribution, highly expressed in the epidermis and endodermis of roots, and at lower level in cells of the vasculature and the cortex. Expressed in xylem parenchyma, phloem and mesophyll cells of leaves.

Its subcellular location is the membrane. Functionally, highly selective inward-rectifying potassium channel that mediates potassium uptake by plant roots. This chain is Potassium channel AKT1 (AKT1), found in Oryza sativa subsp. indica (Rice).